The primary structure comprises 260 residues: tRNA1(Val) (adenine(37)-N6)-methyltransferase (260 aa).

The protein belongs to the methyltransferase superfamily. tRNA (adenine-N(6)-)-methyltransferase family.

The protein localises to the cytoplasm. The enzyme catalyses adenosine(37) in tRNA1(Val) + S-adenosyl-L-methionine = N(6)-methyladenosine(37) in tRNA1(Val) + S-adenosyl-L-homocysteine + H(+). Functionally, specifically methylates the adenine in position 37 of tRNA(1)(Val) (anticodon cmo5UAC). The sequence is that of tRNA1(Val) (adenine(37)-N6)-methyltransferase from Serratia proteamaculans (strain 568).